Consider the following 312-residue polypeptide: Olfactory receptor 7D4 (312 aa).

Topologically, residues 1-25 (MEAENLTELSKFLLLGLSDDPELQP) are extracellular. Asparagine 5 is a glycosylation site (N-linked (GlcNAc...) asparagine). Residues 26 to 46 (VLFGLFLSMYLVTVLGNLLII) traverse the membrane as a helical segment. At 47-54 (LAVSSDSH) the chain is on the cytoplasmic side. Residues 55–75 (LHTPMYFFLSNLSFVDICFIS) traverse the membrane as a helical segment. The Extracellular segment spans residues 76–99 (TTVPKMLVSIQARSKDISYMGCLT). Cysteine 97 and cysteine 189 form a disulfide bridge. The helical transmembrane segment at 100 to 120 (QVYFLMMFAGMDTFLLAVMAY) threads the bilayer. At 121–139 (DRFVAICHPLHYTVIMNPC) the chain is on the cytoplasmic side. Residues 140–160 (LCGLLVLASWFIIFWFSLVHI) form a helical membrane-spanning segment. Residues 161–197 (LLMKRLTFSTGTEIPHFFCEPAQVLKVACSNTLLNNI) are Extracellular-facing. The helical transmembrane segment at 198-217 (VLYVATALLGVFPVAGILFS) threads the bilayer. The Cytoplasmic portion of the chain corresponds to 218–237 (YSQIVSSLMGMSSTKGKYKA). Residues 238–258 (FSTCGSHLCVVSLFYGTGLGV) traverse the membrane as a helical segment. Residues 259–271 (YLSSAVTHSSQSS) lie on the Extracellular side of the membrane. A helical transmembrane segment spans residues 272 to 292 (STASVMYAMVTPMLNPFIYSL). The Cytoplasmic portion of the chain corresponds to 293 to 312 (RNKDVKGALERLLSRADSCP).

The protein belongs to the G-protein coupled receptor 1 family. As to expression, nasal olfactory epithelium.

The protein resides in the cell membrane. In terms of biological role, odorant receptor. Selectively activated by androstenone and the related odorous steroid androstadienone. The protein is Olfactory receptor 7D4 (OR7D4) of Homo sapiens (Human).